The following is a 266-amino-acid chain: Chymotrypsin-like elastase family member 1 (266 aa).

The first 16 residues, 1 to 16 (MLRLLVFTSLVLYGHS), serve as a signal peptide directing secretion. Positions 17–26 (TQDFPETNAR) are cleaved as a propeptide — activation peptide. In terms of domain architecture, Peptidase S1 spans 27–264 (VVGGTAVSKN…YISWINNAIA (238 aa)). Cysteines 56 and 72 form a disulfide. His-71 acts as the Charge relay system in catalysis. Residues Asp-85, Asn-87, Gln-90, and Glu-95 each coordinate Ca(2+). Asn-87 carries an N-linked (GlcNAc...) asparagine glycan. The active-site Charge relay system is Asp-119. 3 disulfide bridges follow: Cys-153–Cys-220, Cys-184–Cys-200, and Cys-210–Cys-240. The active-site Charge relay system is the Ser-214. Residue Asn-241 is glycosylated (N-linked (GlcNAc...) asparagine).

It belongs to the peptidase S1 family. Elastase subfamily. It depends on Ca(2+) as a cofactor. Pancreas.

The protein resides in the secreted. It carries out the reaction Hydrolysis of proteins, including elastin. Preferential cleavage: Ala-|-Xaa.. Its function is as follows. Serine proteases that hydrolyze many proteins in addition to elastin. This is Chymotrypsin-like elastase family member 1 (CELA1) from Bos taurus (Bovine).